The primary structure comprises 1412 residues: DNA-directed RNA polymerase subunit beta' (1412 aa).

Zn(2+) is bound by residues C70, C72, C85, and C88. Positions 460, 462, and 464 each coordinate Mg(2+). Zn(2+) contacts are provided by C819, C893, C900, and C903. Residues 1393 to 1412 (EAFEFGTPSAPAEEPQHPAE) are disordered.

It belongs to the RNA polymerase beta' chain family. The RNAP catalytic core consists of 2 alpha, 1 beta, 1 beta' and 1 omega subunit. When a sigma factor is associated with the core the holoenzyme is formed, which can initiate transcription. The cofactor is Mg(2+). Zn(2+) serves as cofactor.

The catalysed reaction is RNA(n) + a ribonucleoside 5'-triphosphate = RNA(n+1) + diphosphate. In terms of biological role, DNA-dependent RNA polymerase catalyzes the transcription of DNA into RNA using the four ribonucleoside triphosphates as substrates. This is DNA-directed RNA polymerase subunit beta' from Burkholderia mallei (strain NCTC 10229).